Reading from the N-terminus, the 655-residue chain is A-type voltage-gated potassium channel KCND3 (655 aa).

At 1 to 182 (MAAGVAAWLP…FENPHTSTLA (182 aa)) the chain is on the cytoplasmic side. 2 interaction with KCNIP1 regions span residues 6–21 (AAWL…GWMP) and 70–78 (EKEFFFNED). The Zn(2+) site is built by His-104, Cys-110, Cys-131, and Cys-132. Ser-153 bears the Phosphoserine mark. A helical membrane pass occupies residues 183–204 (LVFYYVTGFFIAVSVITNVVET). At 205–223 (VPCGTVPGSKELPCGERYS) the chain is on the extracellular side. A helical transmembrane segment spans residues 224–246 (VAFFCLDTACVMIFTVEYLLRLF). Topologically, residues 247–253 (AAPSRYR) are cytoplasmic. Residues 254–277 (FIRSVMSIIDVVAIMPYYIGLVMT) form a helical membrane-spanning segment. Topologically, residues 278–283 (NNEDVS) are extracellular. Residues 284–306 (GAFVTLRVFRVFRIFKFSRHSQG) form a helical; Voltage-sensor membrane-spanning segment. Residues 307-318 (LRILGYTLKSCA) are Cytoplasmic-facing. A helical transmembrane segment spans residues 319 to 343 (SELGFLLFSLTMAIIIFATVMFYAE). At 344-352 (KGSSASKFT) the chain is on the extracellular side. An intramembrane region (helical) is located at residues 353 to 366 (SIPASFWYTIVTMT). Positions 367, 368, 369, and 370 each coordinate K(+). The Selectivity filter motif lies at 367–372 (TLGYGD). Residues 367-374 (TLGYGDMV) lie within the membrane without spanning it. The chain crosses the membrane as a helical span at residues 378–400 (IAGKIFGSICSLSGVLVIALPVP). Over 401 to 655 (VIVSNFSRIY…TSNVVKVSVL (255 aa)) the chain is Cytoplasmic. At Thr-459 the chain carries Phosphothreonine. Residues 470–487 (SLIESQHHHLLHCLEKTT) are interaction with KCNIP1 and KCNIP2. The mediates dendritic targeting stretch occupies residues 474 to 489 (SQHHHLLHCLEKTTGL). A disordered region spans residues 523-565 (SSMQNYPSTRSPSLSSHSGLTTTCCSRRSKKTTHLPNSNLPAT). Positions 529 to 548 (PSTRSPSLSSHSGLTTTCCS) are enriched in low complexity. Residue Ser-569 is modified to Phosphoserine; by CaMK2D. Ser-585 is modified (phosphoserine). Residues 616-647 (SIPTPPALTPEGESRPPPASPGPNTNIPSITS) form a disordered region. Over residues 637–647 (GPNTNIPSITS) the composition is skewed to polar residues.

This sequence belongs to the potassium channel family. D (Shal) (TC 1.A.1.2) subfamily. Kv4.3/KCND3 sub-subfamily. In terms of assembly, homotetramer. Heterotetramer with KCND2. Associates with the regulatory subunits KCNIP3 and KCNIP4. Interacts with KCNE1, KCNE2, SCN1B and KCNAB1 and DLG1. Component of heteromultimeric potassium channels. Identified in potassium channel complexes containing KCND1, KCND2, KCND3, KCNIP1, KCNIP2, KCNIP3, KCNIP4, DPP6 and DPP10. Interacts with KCNIP1; each KCNIP1 monomer interacts with two adjacent KCND3 subunits, through both the N-terminal inactivation ball of a KCND3 subunit and a C-terminal helix from the adjacent KCND3 subunit, clamping them together; this interaction stabilizes the tetrameric form and modulates the channel gating kinetics namely channel activation and inactivation kinetics and rate of recovery from inactivation. Interacts with DPP6; this interaction modulates the channel gating kinetics namely channel activation and inactivation kinetics and rate of recovery from inactivation. Interacts with KCNIP2; each KCNIP2 monomer interacts with two adjacent KCND3 subunits, through both the N-terminal inactivation ball of a KCND3 subunit and a C-terminal helix from the adjacent KCND3 subunit, clamping them together; this interaction modulates the channel gating kinetics. Post-translationally, regulated through phosphorylation at Ser-569 by CaMK2D. As to expression, highly expressed in brain, in particular in the retrosplenial cortex, medial habenula, anterior thalamus, hippocampus, cerebellum and lateral geniculate and superior colliculus. Highly expressed in heart atrium (at protein level) and throughout the ventricle wall, in lung and vas deferens.

It localises to the cell membrane. The protein localises to the sarcolemma. It is found in the cell projection. Its subcellular location is the dendrite. The catalysed reaction is K(+)(in) = K(+)(out). Its function is as follows. Pore-forming (alpha) subunit of voltage-gated A-type potassium channels that mediates transmembrane potassium transport in excitable membranes, in brain and heart. In cardiomyocytes, may generate the transient outward potassium current I(To). In neurons, may conduct the transient subthreshold somatodendritic A-type potassium current (ISA). Kinetics properties are characterized by fast activation at subthreshold membrane potentials, rapid inactivation, and quick recovery from inactivation. Channel properties are modulated by interactions with regulatory subunits. Interaction with the regulatory subunits KCNIP1 or KCNIP2 modulates the channel gating kinetics namely channel activation and inactivation kinetics and rate of recovery from inactivation. Likewise, interaction with DPP6 modulates the channel gating kinetics namely channel activation and inactivation kinetics. The polypeptide is A-type voltage-gated potassium channel KCND3 (Rattus norvegicus (Rat)).